Here is a 2470-residue protein sequence, read N- to C-terminus: Serine/threonine-protein kinase mTor (2470 aa).

HEAT repeat units lie at residues 172–209, 746–785, 791–829, 835–873, 962–999, 1043–1080, 1083–1122, and 1124–1160; these read QHIL…VTAQ, SYMN…VNGG, LWAD…ATGR, HKYP…MDPY, PYLA…FVKL, DYLA…FGST, YYLP…QLDF, and DFSS…QLGK. The FAT domain occupies 1349 to 1903; sequence LLGTRAMACR…VYPLTVASKS (555 aa). TPR repeat units follow at residues 1407-1440 and 1718-1751; these read ANEL…DSSD and MATW…DPNW. The stretch at 1854–1891 is one HEAT 9 repeat; sequence NTWLQVIPQLIARIDTHRQLVGQLIHQLLMDIGKNHPQ. The region spanning 2077–2389 is the PI3K/PI4K catalytic domain; the sequence is IKTNLQVITS…SLSNSVEDSL (313 aa). The G-loop stretch occupies residues 2083 to 2089; sequence VITSKQR. The catalytic loop stretch occupies residues 2256–2264; the sequence is GLGDRHPSN. Residues 2276–2301 are activation loop; sequence HIDFGDCFEVAMTREKFPEKIPFRLT. The segment at 2364–2389 is disordered; the sequence is AGAGAPGGRGGSGMQDSLSNSVEDSL. Over residues 2367 to 2376 the composition is skewed to gly residues; the sequence is GAPGGRGGSG. Positions 2377 to 2386 are enriched in polar residues; that stretch reads MQDSLSNSVE. Residues 2438–2470 form the FATC domain; it reads KSVNEQSQVELLIQQATNNENLCQCYIGWCPFW.

It belongs to the PI3/PI4-kinase family. In terms of assembly, may be part of a minimal complex, TORC1, consisting of mTor, raptor and lst8. May be part of a minimal complex, TORC2, consisting of mTor, rictor and lst8. Self-associates; assembles into homomultimeric complexes. Component of a multiprotein complex.

The enzyme catalyses L-seryl-[protein] + ATP = O-phospho-L-seryl-[protein] + ADP + H(+). It catalyses the reaction L-threonyl-[protein] + ATP = O-phospho-L-threonyl-[protein] + ADP + H(+). Functionally, promotes cell and tissue growth, maintains tissue homeostatis and controls responses to environmental stress and aging. Regulates growth during animal development by coupling growth factor signaling to nutrient availability. Central regulators of autophagy. May be involved in atg1 phosphorylation. May also be involved, directly or indirectly, in the control of neuronal function. Phosphorylates S6K/p70S6K, in vitro. May regulate the activity of S6K. Overexpression inhibits growth and reduces cell size. Affects the timing of neuronal cell differentiation. Hyperactivation of the signaling leads to accelerated differentiation, whereas inhibition of the signaling retards differentiation. Thus, in addition to controlling growth of the cell in which it resides, it can also influence growth of distant cells and organs during development via a humoral mechanism. As part of the TORC1 complex regulates energy homeostasis and promotes certain aspects of larval growth by negatively regulating REPTOR. REPTOR functions downstream of TORC1 to regulate the expression of stress response genes in response to TORC1 inhibition resulting from nutrient deprivation. When TORC1 activity is high it phosphorylates REPTOR which inhibits its recruitment into the nucleus and antagonizes their function. This function is essential under normal feeding conditions to promote TORC1-dependent growth during larval development and, in adults and larvae to prevent the REPTOR-dependent expression of nutrient stress response genes. In short, during development, it primarily controls growth, whereas in the adult, where there is relatively little growth, it controls aging and other aspects of nutrient-related physiology. Rag GTPases act as activators of TORC1 in response to amino acid signals. This chain is Serine/threonine-protein kinase mTor, found in Drosophila melanogaster (Fruit fly).